Reading from the N-terminus, the 306-residue chain is UDP-N-acetylenolpyruvoylglucosamine reductase (306 aa).

In terms of domain architecture, FAD-binding PCMH-type spans threonine 33–glycine 197. Arginine 176 is a catalytic residue. Serine 226 (proton donor) is an active-site residue. Glutamate 296 is an active-site residue.

Belongs to the MurB family. Requires FAD as cofactor.

Its subcellular location is the cytoplasm. It catalyses the reaction UDP-N-acetyl-alpha-D-muramate + NADP(+) = UDP-N-acetyl-3-O-(1-carboxyvinyl)-alpha-D-glucosamine + NADPH + H(+). It functions in the pathway cell wall biogenesis; peptidoglycan biosynthesis. Cell wall formation. The polypeptide is UDP-N-acetylenolpyruvoylglucosamine reductase (Staphylococcus epidermidis (strain ATCC 35984 / DSM 28319 / BCRC 17069 / CCUG 31568 / BM 3577 / RP62A)).